The primary structure comprises 353 residues: Phosphate acyltransferase (353 aa).

Belongs to the PlsX family. In terms of assembly, homodimer. Probably interacts with PlsY.

The protein localises to the cytoplasm. It catalyses the reaction a fatty acyl-[ACP] + phosphate = an acyl phosphate + holo-[ACP]. The protein operates within lipid metabolism; phospholipid metabolism. Its function is as follows. Catalyzes the reversible formation of acyl-phosphate (acyl-PO(4)) from acyl-[acyl-carrier-protein] (acyl-ACP). This enzyme utilizes acyl-ACP as fatty acyl donor, but not acyl-CoA. This is Phosphate acyltransferase from Syntrophobacter fumaroxidans (strain DSM 10017 / MPOB).